The chain runs to 371 residues: Maltose/maltodextrin import ATP-binding protein MalK (371 aa).

The region spanning 4-234 is the ABC transporter domain; the sequence is VTLKNVCKAY…PENRFVAGFI (231 aa). 36–43 contributes to the ATP binding site; it reads GPSGCGKS.

It belongs to the ABC transporter superfamily. Maltooligosaccharide importer (TC 3.A.1.1.1) family. As to quaternary structure, the complex is composed of two ATP-binding proteins (MalK), two transmembrane proteins (MalG and MalK) and a solute-binding protein (MalE).

The protein localises to the cell inner membrane. It catalyses the reaction D-maltose(out) + ATP + H2O = D-maltose(in) + ADP + phosphate + H(+). Its function is as follows. Part of the ABC transporter complex MalEFGK involved in maltose/maltodextrin import. Responsible for energy coupling to the transport system. In Vibrio vulnificus (strain CMCP6), this protein is Maltose/maltodextrin import ATP-binding protein MalK.